Reading from the N-terminus, the 958-residue chain is Glycine dehydrogenase (decarboxylating) (958 aa).

An N6-(pyridoxal phosphate)lysine modification is found at Lys707.

This sequence belongs to the GcvP family. As to quaternary structure, the glycine cleavage system is composed of four proteins: P, T, L and H. The cofactor is pyridoxal 5'-phosphate.

It carries out the reaction N(6)-[(R)-lipoyl]-L-lysyl-[glycine-cleavage complex H protein] + glycine + H(+) = N(6)-[(R)-S(8)-aminomethyldihydrolipoyl]-L-lysyl-[glycine-cleavage complex H protein] + CO2. In terms of biological role, the glycine cleavage system catalyzes the degradation of glycine. The P protein binds the alpha-amino group of glycine through its pyridoxal phosphate cofactor; CO(2) is released and the remaining methylamine moiety is then transferred to the lipoamide cofactor of the H protein. The sequence is that of Glycine dehydrogenase (decarboxylating) from Stutzerimonas stutzeri (strain A1501) (Pseudomonas stutzeri).